The chain runs to 182 residues: Protein Syd (182 aa).

It belongs to the Syd family.

It is found in the cell inner membrane. Its function is as follows. Interacts with the SecY protein in vivo. May bind preferentially to an uncomplexed state of SecY, thus functioning either as a chelating agent for excess SecY in the cell or as a regulatory factor that negatively controls the translocase function. The sequence is that of Protein Syd from Aliivibrio salmonicida (strain LFI1238) (Vibrio salmonicida (strain LFI1238)).